The chain runs to 159 residues: 2-C-methyl-D-erythritol 2,4-cyclodiphosphate synthase (159 aa).

Residues Asp8 and His10 each contribute to the a divalent metal cation site. 4-CDP-2-C-methyl-D-erythritol 2-phosphate-binding positions include 8–10 and 34–35; these read DVH and HS. Position 42 (His42) interacts with a divalent metal cation. 4-CDP-2-C-methyl-D-erythritol 2-phosphate is bound by residues 56 to 58, 61 to 65, 100 to 106, 132 to 135, Phe139, and Arg142; these read DIG, FPDTD, AQAPKML, and TTTE.

The protein belongs to the IspF family. In terms of assembly, homotrimer. A divalent metal cation is required as a cofactor.

The catalysed reaction is 4-CDP-2-C-methyl-D-erythritol 2-phosphate = 2-C-methyl-D-erythritol 2,4-cyclic diphosphate + CMP. It participates in isoprenoid biosynthesis; isopentenyl diphosphate biosynthesis via DXP pathway; isopentenyl diphosphate from 1-deoxy-D-xylulose 5-phosphate: step 4/6. Its function is as follows. Involved in the biosynthesis of isopentenyl diphosphate (IPP) and dimethylallyl diphosphate (DMAPP), two major building blocks of isoprenoid compounds. Catalyzes the conversion of 4-diphosphocytidyl-2-C-methyl-D-erythritol 2-phosphate (CDP-ME2P) to 2-C-methyl-D-erythritol 2,4-cyclodiphosphate (ME-CPP) with a corresponding release of cytidine 5-monophosphate (CMP). This Salmonella arizonae (strain ATCC BAA-731 / CDC346-86 / RSK2980) protein is 2-C-methyl-D-erythritol 2,4-cyclodiphosphate synthase.